The chain runs to 143 residues: Large ribosomal subunit protein uL11 (143 aa).

Belongs to the universal ribosomal protein uL11 family. As to quaternary structure, part of the ribosomal stalk of the 50S ribosomal subunit. Interacts with L10 and the large rRNA to form the base of the stalk. L10 forms an elongated spine to which L12 dimers bind in a sequential fashion forming a multimeric L10(L12)X complex. Post-translationally, one or more lysine residues are methylated.

Its function is as follows. Forms part of the ribosomal stalk which helps the ribosome interact with GTP-bound translation factors. This chain is Large ribosomal subunit protein uL11, found in Paracidovorax citrulli (strain AAC00-1) (Acidovorax citrulli).